Consider the following 751-residue polypeptide: Semaphorin-3C (751 aa).

Residues 1 to 20 form the signal peptide; sequence MAFRTICVLVGVFICSICVK. The Sema domain maps to 28–511; the sequence is RVYLTFDELR…SNEGVSQVSL (484 aa). Asn81 is a glycosylation site (N-linked (GlcNAc...) asparagine). A disulfide bond links Cys101 and Cys112. The N-linked (GlcNAc...) asparagine glycan is linked to Asn123. The cysteines at positions 130 and 139 are disulfide-linked. N-linked (GlcNAc...) asparagine glycosylation is found at Asn252 and Asn268. Cystine bridges form between Cys266-Cys378 and Cys290-Cys338. Asn465 carries N-linked (GlcNAc...) asparagine glycosylation. Residues Cys514 and Cys532 are joined by a disulfide bond. The 85-residue stretch at 571 to 655 folds into the Ig-like C2-type domain; it reads AYRNAAEIVQ…TENSFKQTIA (85 aa). N-linked (GlcNAc...) asparagine glycans are attached at residues Asn585 and Asn586. Cys643 and Cys709 are joined by a disulfide. The segment covering 712–731 has biased composition (basic and acidic residues); it reads TRQQHQQGDESQKMRGDYGK. The interval 712 to 751 is disordered; that stretch reads TRQQHQQGDESQKMRGDYGKLKALINSRKSRNRRNQLPES.

This sequence belongs to the semaphorin family. In terms of assembly, interacts with PLXND1. Expressed intensely in the heart, skeletal muscle, colon, small intestine, ovary, testis, and prostate. Faint expression ubiquitously among other organs, including brain.

It localises to the secreted. In terms of biological role, binds to plexin family members and plays an important role in the regulation of developmental processes. Required for normal cardiovascular development during embryogenesis. Functions as attractant for growing axons, and thereby plays an important role in axon growth and axon guidance. This Homo sapiens (Human) protein is Semaphorin-3C (SEMA3C).